The following is a 293-amino-acid chain: MGPLFSSMILLASTSELLAACWRNLVLGVVQGLTEFLPISSTAHLKVVPMLVGWGDPGVSATAVIQLGSILAVIVYFKRDLAEVLKGIALAFKHGQWREPKARLGLAIAIGTMPILLAGMAIKLFWPGYEASSIRSLPSIAVVSIVMALLLALAERIGPRLKQMHLVKGRDGFVVGLAQALALIPGVSRSGSTLTASLFDGWQRQDAARFSFLLGIPAITLAGLVELKDAFAELSLEGVLPLLVGIVSAAFVSWLAIDWLLKYLQRHSTWIFVAYRLLFGVLVLAWWLSDTSN.

A run of 7 helical transmembrane segments spans residues 57-77 (PGVS…IVYF), 106-126 (LAIA…KLFW), 134-154 (IRSL…LALA), 172-192 (GFVV…RSGS), 212-232 (FLLG…DAFA), 239-259 (VLPL…AIDW), and 268-288 (STWI…AWWL).

The protein belongs to the UppP family.

Its subcellular location is the cell inner membrane. The enzyme catalyses di-trans,octa-cis-undecaprenyl diphosphate + H2O = di-trans,octa-cis-undecaprenyl phosphate + phosphate + H(+). In terms of biological role, catalyzes the dephosphorylation of undecaprenyl diphosphate (UPP). Confers resistance to bacitracin. This chain is Undecaprenyl-diphosphatase, found in Prochlorococcus marinus (strain MIT 9303).